A 304-amino-acid chain; its full sequence is 2-phospho-L-lactate transferase (304 aa).

Residue D49 coordinates 7,8-didemethyl-8-hydroxy-5-deazariboflavin.

The protein belongs to the CofD family. In terms of assembly, homodimer. Requires Mg(2+) as cofactor.

The enzyme catalyses (2S)-lactyl-2-diphospho-5'-guanosine + 7,8-didemethyl-8-hydroxy-5-deazariboflavin = oxidized coenzyme F420-0 + GMP + H(+). The protein operates within cofactor biosynthesis; coenzyme F420 biosynthesis. Catalyzes the transfer of the 2-phospholactate moiety from (2S)-lactyl-2-diphospho-5'-guanosine to 7,8-didemethyl-8-hydroxy-5-deazariboflavin (FO) with the formation of oxidized coenzyme F420-0 and GMP. In Methanocorpusculum labreanum (strain ATCC 43576 / DSM 4855 / Z), this protein is 2-phospho-L-lactate transferase.